The primary structure comprises 274 residues: MNLEHNFNLPNYINHHLHHLQLNLSNLKFLNFNDNYIRNFWVCNFDSIFLSIFLGLVILISFFKISKTFTIQTPNKIQICIELIIDFINNNVKEIYHGKNKLIAPLSLTIFVWIFLMNLMDLIPIDLVPFIFQNFFETQIPIKLVPTTDVNITISMSLVVFLLIIFYSIKIKGIKGFLKDLFLQPFHNPIFFVFNFILESISLLSKPVSLGLRLFGNMYAGEMIFILISGLLPWWLQWILSVPWAIFHILIISLQSFIFMVLTIVYLSMASTKH.

A run of 5 helical transmembrane segments spans residues 40-60, 110-130, 149-169, 224-244, and 245-265; these read FWVCNFDSIFLSIFLGLVILI, IFVWIFLMNLMDLIPIDLVPF, DVNITISMSLVVFLLIIFYSI, IFILISGLLPWWLQWILSVPW, and AIFHILIISLQSFIFMVLTIV.

It belongs to the ATPase A chain family. F-type ATPases have 2 components, CF(1) - the catalytic core - and CF(0) - the membrane proton channel. CF(1) has five subunits: alpha(3), beta(3), gamma(1), delta(1), epsilon(1). CF(0) has three main subunits: a(1), b(2) and c(9-12). The alpha and beta chains form an alternating ring which encloses part of the gamma chain. CF(1) is attached to CF(0) by a central stalk formed by the gamma and epsilon chains, while a peripheral stalk is formed by the delta and b chains.

Its subcellular location is the cell membrane. Functionally, key component of the proton channel; it plays a direct role in the translocation of protons across the membrane. This chain is ATP synthase subunit a, found in Buchnera aphidicola subsp. Baizongia pistaciae (strain Bp).